The chain runs to 599 residues: UvrABC system protein C (599 aa).

Positions 15-93 (DNPGVYQYYD…IKTLQPRYNI (79 aa)) constitute a GIY-YIG domain. A UVR domain is found at 207 to 242 (KDSMKDFKKVMTNLAQNMHFEEAQKIKEKIEILENY).

The protein belongs to the UvrC family. Interacts with UvrB in an incision complex.

The protein resides in the cytoplasm. Its function is as follows. The UvrABC repair system catalyzes the recognition and processing of DNA lesions. UvrC both incises the 5' and 3' sides of the lesion. The N-terminal half is responsible for the 3' incision and the C-terminal half is responsible for the 5' incision. The protein is UvrABC system protein C of Flavobacterium psychrophilum (strain ATCC 49511 / DSM 21280 / CIP 103535 / JIP02/86).